We begin with the raw amino-acid sequence, 165 residues long: Type 3 secretion system regulator YopR (165 aa).

The tract at residues 2–11 (TVTLNRGSIT) is 5' secretion signal. The 3' secretion signal stretch occupies residues 131–149 (PYLSELINKELMILLPYNS).

It belongs to the YopR family.

It localises to the secreted. Its function is as follows. May be involved in the regulation of the assembly of the type III secretion system (T3SS), also called injectisome, which is used to inject bacterial effector proteins into eukaryotic host cells. May control the secretion and/or polymerization of YscF/SctF, the principal component of the needle filament, thereby impacting the assembly of the T3SS. Involved in pathogenesis. Essential for the establishment of Yersinia infections in a mouse model system. The polypeptide is Type 3 secretion system regulator YopR (Yersinia enterocolitica).